A 368-amino-acid chain; its full sequence is E3 ubiquitin-protein ligase ATL31 (368 aa).

The first 23 residues, 1–23, serve as a signal peptide directing secretion; the sequence is MDPIKHISLPVLVLFLLLSVSAG. The helical transmembrane segment at 46–66 threads the bilayer; sequence AVVVVVVIAALFFMGFFTVYI. The RING-type; atypical zinc-finger motif lies at 124–166; that stretch reads CAICLNEFEDDETLRLLPKCDHVFHPHCIGAWLQGHVTCPVCR. Ser-247 carries the post-translational modification Phosphoserine. Residues 342–368 are disordered; sequence NKDGEGTSSVQHIGTVGSTSGSLRLPV. Over residues 347–368 the composition is skewed to polar residues; it reads GTSSVQHIGTVGSTSGSLRLPV.

Belongs to the RING-type zinc finger family. ATL subfamily.

The protein resides in the membrane. The catalysed reaction is S-ubiquitinyl-[E2 ubiquitin-conjugating enzyme]-L-cysteine + [acceptor protein]-L-lysine = [E2 ubiquitin-conjugating enzyme]-L-cysteine + N(6)-ubiquitinyl-[acceptor protein]-L-lysine.. It functions in the pathway protein modification; protein ubiquitination. In terms of biological role, E3 ubiquitin-protein ligase that is required for the plant C/N response during seedling growth transition. May be involved in the early steps of the plant defense signaling pathway. The sequence is that of E3 ubiquitin-protein ligase ATL31 (ATL31) from Arabidopsis thaliana (Mouse-ear cress).